Consider the following 316-residue polypeptide: 4-hydroxy-3-methylbut-2-enyl diphosphate reductase (316 aa).

Cys-12 is a binding site for [4Fe-4S] cluster. 2 residues coordinate (2E)-4-hydroxy-3-methylbut-2-enyl diphosphate: His-41 and His-74. Dimethylallyl diphosphate-binding residues include His-41 and His-74. Residues His-41 and His-74 each contribute to the isopentenyl diphosphate site. Cys-96 serves as a coordination point for [4Fe-4S] cluster. His-124 contacts (2E)-4-hydroxy-3-methylbut-2-enyl diphosphate. His-124 contributes to the dimethylallyl diphosphate binding site. Isopentenyl diphosphate is bound at residue His-124. The active-site Proton donor is the Glu-126. Position 167 (Thr-167) interacts with (2E)-4-hydroxy-3-methylbut-2-enyl diphosphate. Residue Cys-197 participates in [4Fe-4S] cluster binding. Positions 225, 226, 227, and 269 each coordinate (2E)-4-hydroxy-3-methylbut-2-enyl diphosphate. Positions 225, 226, 227, and 269 each coordinate dimethylallyl diphosphate. 4 residues coordinate isopentenyl diphosphate: Ser-225, Ser-226, Asn-227, and Ser-269.

This sequence belongs to the IspH family. In terms of assembly, homodimer. It depends on [4Fe-4S] cluster as a cofactor.

The catalysed reaction is isopentenyl diphosphate + 2 oxidized [2Fe-2S]-[ferredoxin] + H2O = (2E)-4-hydroxy-3-methylbut-2-enyl diphosphate + 2 reduced [2Fe-2S]-[ferredoxin] + 2 H(+). The enzyme catalyses dimethylallyl diphosphate + 2 oxidized [2Fe-2S]-[ferredoxin] + H2O = (2E)-4-hydroxy-3-methylbut-2-enyl diphosphate + 2 reduced [2Fe-2S]-[ferredoxin] + 2 H(+). It participates in isoprenoid biosynthesis; dimethylallyl diphosphate biosynthesis; dimethylallyl diphosphate from (2E)-4-hydroxy-3-methylbutenyl diphosphate: step 1/1. The protein operates within isoprenoid biosynthesis; isopentenyl diphosphate biosynthesis via DXP pathway; isopentenyl diphosphate from 1-deoxy-D-xylulose 5-phosphate: step 6/6. Catalyzes the conversion of 1-hydroxy-2-methyl-2-(E)-butenyl 4-diphosphate (HMBPP) into a mixture of isopentenyl diphosphate (IPP) and dimethylallyl diphosphate (DMAPP). Acts in the terminal step of the DOXP/MEP pathway for isoprenoid precursor biosynthesis. The polypeptide is 4-hydroxy-3-methylbut-2-enyl diphosphate reductase (Pectobacterium atrosepticum (strain SCRI 1043 / ATCC BAA-672) (Erwinia carotovora subsp. atroseptica)).